We begin with the raw amino-acid sequence, 984 residues long: uncharacterized protein (984 aa).

A disordered region spans residues Phe941–Tyr984.

The protein localises to the virion. This is an uncharacterized protein from Acanthamoeba polyphaga (Amoeba).